The chain runs to 329 residues: Peroxidase 17 (329 aa).

An N-terminal signal peptide occupies residues 1-19 (MSLLPHLILYLTLLTVVVT). Intrachain disulfides connect Cys32–Cys112, Cys65–Cys70, Cys118–Cys315, and Cys197–Cys229. His63 acts as the Proton acceptor in catalysis. Residues Asp64, Val67, Gly69, Asp71, and Ser73 each coordinate Ca(2+). Position 160 (Pro160) interacts with substrate. N-linked (GlcNAc...) asparagine glycans are attached at residues Asn165 and Asn177. His190 contacts heme b. Residue Ser191 participates in Ca(2+) binding. Asn206 and Asn236 each carry an N-linked (GlcNAc...) asparagine glycan. Positions 242, 244, and 249 each coordinate Ca(2+).

This sequence belongs to the peroxidase family. Classical plant (class III) peroxidase subfamily. It depends on heme b as a cofactor. Ca(2+) is required as a cofactor.

Its subcellular location is the secreted. The protein localises to the vacuole. It carries out the reaction 2 a phenolic donor + H2O2 = 2 a phenolic radical donor + 2 H2O. Functionally, removal of H(2)O(2), oxidation of toxic reductants, biosynthesis and degradation of lignin, suberization, auxin catabolism, response to environmental stresses such as wounding, pathogen attack and oxidative stress. These functions might be dependent on each isozyme/isoform in each plant tissue. This Arabidopsis thaliana (Mouse-ear cress) protein is Peroxidase 17 (PER17).